The sequence spans 179 residues: Ribosomal RNA small subunit methyltransferase G (179 aa).

S-adenosyl-L-methionine contacts are provided by residues glycine 54, phenylalanine 59, 105–106 (IE), and arginine 121.

This sequence belongs to the methyltransferase superfamily. RNA methyltransferase RsmG family.

It localises to the cytoplasm. The enzyme catalyses guanosine(527) in 16S rRNA + S-adenosyl-L-methionine = N(7)-methylguanosine(527) in 16S rRNA + S-adenosyl-L-homocysteine. Its function is as follows. Specifically methylates the N7 position of guanine in position 527 of 16S rRNA. The polypeptide is Ribosomal RNA small subunit methyltransferase G (Helicobacter bizzozeronii).